Reading from the N-terminus, the 434-residue chain is Adenylosuccinate synthetase (434 aa).

GTP is bound by residues 22–28 and 50–52; these read GDEGKGK and GHT. Catalysis depends on aspartate 23, which acts as the Proton acceptor. Mg(2+) is bound by residues aspartate 23 and glycine 50. Residues 23 to 26, 48 to 51, threonine 139, arginine 153, glutamine 234, threonine 249, and arginine 313 contribute to the IMP site; these read DEGK and NAGH. The active-site Proton donor is histidine 51. Residue 309 to 315 participates in substrate binding; the sequence is ATTGRKR. GTP contacts are provided by residues arginine 315, 341–343, and 423–425; these read KLD and SVG.

The protein belongs to the adenylosuccinate synthetase family. Homodimer. The cofactor is Mg(2+).

Its subcellular location is the cytoplasm. The enzyme catalyses IMP + L-aspartate + GTP = N(6)-(1,2-dicarboxyethyl)-AMP + GDP + phosphate + 2 H(+). It participates in purine metabolism; AMP biosynthesis via de novo pathway; AMP from IMP: step 1/2. In terms of biological role, plays an important role in the de novo pathway of purine nucleotide biosynthesis. Catalyzes the first committed step in the biosynthesis of AMP from IMP. The protein is Adenylosuccinate synthetase of Chlorobium limicola (strain DSM 245 / NBRC 103803 / 6330).